The primary structure comprises 175 residues: Adenine phosphoribosyltransferase (175 aa).

It belongs to the purine/pyrimidine phosphoribosyltransferase family. In terms of assembly, homodimer.

The protein localises to the cytoplasm. The enzyme catalyses AMP + diphosphate = 5-phospho-alpha-D-ribose 1-diphosphate + adenine. Its pathway is purine metabolism; AMP biosynthesis via salvage pathway; AMP from adenine: step 1/1. Catalyzes a salvage reaction resulting in the formation of AMP, that is energically less costly than de novo synthesis. This Parvibaculum lavamentivorans (strain DS-1 / DSM 13023 / NCIMB 13966) protein is Adenine phosphoribosyltransferase.